The sequence spans 914 residues: Alanine--tRNA ligase (914 aa).

The Zn(2+) site is built by H608, H612, C711, and H715.

Belongs to the class-II aminoacyl-tRNA synthetase family. Requires Zn(2+) as cofactor.

The protein localises to the cytoplasm. The enzyme catalyses tRNA(Ala) + L-alanine + ATP = L-alanyl-tRNA(Ala) + AMP + diphosphate. Catalyzes the attachment of alanine to tRNA(Ala) in a two-step reaction: alanine is first activated by ATP to form Ala-AMP and then transferred to the acceptor end of tRNA(Ala). Also edits incorrectly charged Ser-tRNA(Ala) and Gly-tRNA(Ala) via its editing domain. The polypeptide is Alanine--tRNA ligase (Methanoregula boonei (strain DSM 21154 / JCM 14090 / 6A8)).